A 500-amino-acid polypeptide reads, in one-letter code: Maturase K (500 aa).

It belongs to the intron maturase 2 family. MatK subfamily.

The protein resides in the plastid. Its subcellular location is the chloroplast. Its function is as follows. Usually encoded in the trnK tRNA gene intron. Probably assists in splicing its own and other chloroplast group II introns. This is Maturase K from Helianthus annuus (Common sunflower).